A 435-amino-acid chain; its full sequence is ATP-dependent RNA helicase SUB2 (435 aa).

Residues 1–40 (MSHEGQEELLDYSDSEEIAVPTTTAPSAAAGEGANDKEAD) are disordered. The span at 7-17 (EELLDYSDSEE) shows a compositional bias: acidic residues. Low complexity predominate over residues 19–33 (AVPTTTAPSAAAGEG). The Q motif signature appears at 51-79 (TGFRDFLLKPELLRAIGDCGFEHPSEVQQ). The Helicase ATP-binding domain occupies 82 to 257 (IPQSILGTDV…KKFMQNPLEI (176 aa)). ATP is bound at residue 95–102 (AKSGLGKT). The DECD box signature appears at 204–207 (DECD). One can recognise a Helicase C-terminal domain in the interval 269 to 430 (GLQQYYIKLD…EFPEEGVDPS (162 aa)).

Belongs to the DEAD box helicase family. DECD subfamily.

The protein localises to the nucleus. The enzyme catalyses ATP + H2O = ADP + phosphate + H(+). Functionally, ATP-binding RNA helicase involved in transcription elongation and required for the export of mRNA out of the nucleus. SUB2 also plays a role in pre-mRNA splicing and spliceosome assembly. May be involved in rDNA and telomeric silencing, and maintenance of genome integrity. In Debaryomyces hansenii (strain ATCC 36239 / CBS 767 / BCRC 21394 / JCM 1990 / NBRC 0083 / IGC 2968) (Yeast), this protein is ATP-dependent RNA helicase SUB2 (SUB2).